The chain runs to 468 residues: Abscisic acid 8'-hydroxylase 4 (468 aa).

A helical transmembrane segment spans residues 4-24; that stretch reads IWFLVVPILILCLLLVRVIVS. A heme-binding site is contributed by C415.

This sequence belongs to the cytochrome P450 family. The cofactor is heme. Mainly expressed in flowers. Lower expression in siliques, rosette leaves, roots and stems. Not expressed in dry seeds. Expressed in silique envelopes, but not in embryo or endosperm during the seed development.

The protein localises to the membrane. It catalyses the reaction 2-cis-(+)-abscisate + reduced [NADPH--hemoprotein reductase] + O2 = (+)-8'-hydroxyabscisate + oxidized [NADPH--hemoprotein reductase] + H2O + H(+). It participates in plant hormone degradation; abscisic acid degradation. Functionally, involved in the oxidative degradation of abscisic acid, but not in the isomerization of the produced 8'-hydroxyabscisic acid (8'-OH-ABA) to (-)-phaseic acid (PA). In Arabidopsis thaliana (Mouse-ear cress), this protein is Abscisic acid 8'-hydroxylase 4 (CYP707A4).